Consider the following 502-residue polypeptide: Lysine--tRNA ligase (502 aa).

Glu-411 and Glu-418 together coordinate Mg(2+).

Belongs to the class-II aminoacyl-tRNA synthetase family. Homodimer. Mg(2+) serves as cofactor.

The protein resides in the cytoplasm. The enzyme catalyses tRNA(Lys) + L-lysine + ATP = L-lysyl-tRNA(Lys) + AMP + diphosphate. In Chromohalobacter salexigens (strain ATCC BAA-138 / DSM 3043 / CIP 106854 / NCIMB 13768 / 1H11), this protein is Lysine--tRNA ligase.